A 444-amino-acid chain; its full sequence is Jacalin-related lectin 42 (444 aa).

An N-acetylalanine modification is found at A2. Jacalin-type lectin domains follow at residues 2 to 143 (ALMV…YYIR), 146 to 289 (ATKS…YYAP), and 297 to 441 (TEKL…HVIP).

This sequence belongs to the jacalin lectin family.

In Arabidopsis thaliana (Mouse-ear cress), this protein is Jacalin-related lectin 42 (JAL42).